The chain runs to 676 residues: Pre-mRNA-splicing factor clf1 (676 aa).

14 HAT repeats span residues 52–84 (EYQG…WELE), 86–118 (KEFR…SEMR), 120–152 (RNIN…MEET), 154–185 (GNIQ…LEKR), 187–218 (NEFE…FEEE), 220–255 (GTSD…FEAK), 257–291 (KEYE…FEKQ), 301–333 (VILS…LEET), 335–369 (GDPD…LWIF), 379–415 (KDVD…FDIR), 417–448 (MDLQ…LERQ), 450–482 (FEFV…LERG), 484–518 (DDSE…FEEY), and 520–551 (GEYD…FEIN). The span at 554–566 (EEEEEEEEEEEEE) shows a compositional bias: acidic residues. The tract at residues 554–573 (EEEEEEEEEEEEERPVSDEA) is disordered. An HAT 15 repeat occupies 572–610 (EAKRRARAVFERAHKVFKEKEMKEERVELLNAWRAFEHT).

The protein belongs to the crooked-neck family. As to quaternary structure, associated with the spliceosome.

The protein localises to the nucleus. Functionally, involved in pre-mRNA splicing and cell cycle progression. Required for the spliceosome assembly and initiation of the DNA replication. This Aspergillus fumigatus (strain ATCC MYA-4609 / CBS 101355 / FGSC A1100 / Af293) (Neosartorya fumigata) protein is Pre-mRNA-splicing factor clf1 (clf1).